A 228-amino-acid polypeptide reads, in one-letter code: Ribose-5-phosphate isomerase A (228 aa).

Substrate-binding positions include 27–30, 86–89, and 100–103; these read TGTT, DGAD, and KGMG. Residue Glu-109 is the Proton acceptor of the active site. Residue Lys-127 participates in substrate binding.

It belongs to the ribose 5-phosphate isomerase family. Homodimer.

It catalyses the reaction aldehydo-D-ribose 5-phosphate = D-ribulose 5-phosphate. It participates in carbohydrate degradation; pentose phosphate pathway; D-ribose 5-phosphate from D-ribulose 5-phosphate (non-oxidative stage): step 1/1. Its function is as follows. Catalyzes the reversible conversion of ribose-5-phosphate to ribulose 5-phosphate. The chain is Ribose-5-phosphate isomerase A from Borreliella burgdorferi (strain ZS7) (Borrelia burgdorferi).